Reading from the N-terminus, the 693-residue chain is Protein-glutamine gamma-glutamyltransferase E (693 aa).

Tyr111 carries the phosphotyrosine modification. Thr112 carries the post-translational modification Phosphothreonine. The Ca(2+) site is built by Ala222, Asn225, Asn227, Asp228, and Asn230. The active site involves Cys273. Residues Asp302, Asp304, Asn306, Ser308, and Asp325 each contribute to the Ca(2+) site. Active-site residues include His331 and Asp354. Positions 394, 416, 444, and 449 each coordinate Ca(2+). The tract at residues 457–483 is disordered; sequence LDKLKPNASFGATSSRNPEGEDKEPSI.

It belongs to the transglutaminase superfamily. Transglutaminase family. Consists of two polypeptide chains, which are synthesized as a precursor form of a single polypeptide. The cofactor is Ca(2+). Activated by proteolytic processing. In vitro activation is commonly achieved by cleavage with dispase, a neutral bacterial protease. Physiological activation may be catalyzed by CTSL and, to a lesser extent, by CTSS. Expressed in skin and stomach and, at lower levels, in testis, kidney and spleen (at protein level). On the basis of its catalytic activity, detected in the epidermis, around the granular and spinous layers but not in the outermost cornified layers. In hair follicles, mainly located in the medulla and the hair cortex.

Its subcellular location is the cytoplasm. The catalysed reaction is L-glutaminyl-[protein] + L-lysyl-[protein] = [protein]-L-lysyl-N(6)-5-L-glutamyl-[protein] + NH4(+). Functionally, catalyzes the calcium-dependent formation of isopeptide cross-links between glutamine and lysine residues in various proteins, as well as the conjugation of polyamines to proteins. Involved in the formation of the cornified envelope (CE), a specialized component consisting of covalent cross-links of proteins beneath the plasma membrane of terminally differentiated keratinocytes. Catalyzes small proline-rich proteins (SPRR1 and SPRR2) and LOR cross-linking to form small interchain oligomers, which are further cross-linked by TGM1 onto the growing CE scaffold. In hair follicles, involved in cross-linking structural proteins to hardening the inner root sheath. The polypeptide is Protein-glutamine gamma-glutamyltransferase E (Tgm3) (Mus musculus (Mouse)).